The chain runs to 156 residues: Large ribosomal subunit protein uL15 (156 aa).

Residues 1–48 (MKLHDLKPTPGSRKDRKRVGRGPGGTDKTAGRGHKGQKSRSGAGKGAF) are disordered.

Belongs to the universal ribosomal protein uL15 family. As to quaternary structure, part of the 50S ribosomal subunit. Contacts proteins L4, L21 and L35.

Functionally, binds to the 23S rRNA. The polypeptide is Large ribosomal subunit protein uL15 (rplO) (Deinococcus radiodurans (strain ATCC 13939 / DSM 20539 / JCM 16871 / CCUG 27074 / LMG 4051 / NBRC 15346 / NCIMB 9279 / VKM B-1422 / R1)).